We begin with the raw amino-acid sequence, 589 residues long: Leucine-rich repeat and immunoglobulin-like domain-containing nogo receptor-interacting protein 3 (589 aa).

The first 23 residues, 1 to 23 (MTCWLHMLGLHLLLLPTAPLAAG), serve as a signal peptide directing secretion. Positions 24–53 (CPARCECSASTRTVACGRRRLTAIPEGIPA) constitute an LRRNT domain. The Extracellular portion of the chain corresponds to 24-528 (CPARCECSAS…LDLTTILVST (505 aa)). LRR repeat units follow at residues 54 to 75 (ETRM…DLAS), 78 to 99 (TLEE…AFAN), 102 to 123 (RLRV…VFTH), 126 to 147 (SLTL…SFQD), 150 to 171 (SLQR…AFAG), 174 to 195 (GLAE…SLGH), 206 to 227 (HLAI…SHLE), 246 to 267 (NLTS…ALRQ), 270 to 291 (HLTC…SFRD), 294 to 315 (RLRE…AFVG), and 318 to 339 (QIRL…TFHS). N-linked (GlcNAc...) asparagine glycosylation occurs at Asn-184. Asn-246, Asn-256, and Asn-275 each carry an N-linked (GlcNAc...) asparagine glycan. N-linked (GlcNAc...) asparagine glycosylation occurs at Asn-323. One can recognise an LRRCT domain in the interval 351 to 405 (NPLACDCRLLWIVQRRKTLNFDGRLPACATPAEVRGDALHNLPDSVLFEYFVCRK). The Ig-like C2-type domain maps to 406–495 (PKIRERRLQH…GNDTYFATLT (90 aa)). A disulfide bridge connects residues Cys-428 and Cys-479. N-linked (GlcNAc...) asparagine glycans are attached at residues Asn-487, Asn-501, and Asn-509. Residues 529-549 (AMGCITFLGVVLFCFLLLFVW) traverse the membrane as a helical segment. Residues 550–589 (SRGRGQHKNNFSVEYSFRKVDGPAAAAGQGGARKFNMKMI) lie on the Cytoplasmic side of the membrane.

It localises to the membrane. This is Leucine-rich repeat and immunoglobulin-like domain-containing nogo receptor-interacting protein 3 (Lingo3) from Mus musculus (Mouse).